The sequence spans 3423 residues: Genome polyprotein (3423 aa).

Positions 1-25 (MKNPKKKSGGFRIVNMLKRGVARVS) are disordered. Topologically, residues 1–104 (MKNPKKKSGG…INARKEKKRR (104 aa)) are cytoplasmic. Residues 37–72 (LLLGHGPIRMVLAILAFLRFTAIKPSLGLINRWGSV) are hydrophobic; homodimerization of capsid protein C. The propeptide at 105–122 (GTDTSVGIVGLLLTTAMA) is ER anchor for capsid protein C, removed in mature form by serine protease NS3. The helical transmembrane segment at 105–125 (GTDTSVGIVGLLLTTAMAVEV) threads the bilayer. At 126–249 (TRRGNAYYMY…YTKHLIRVEN (124 aa)) the chain is on the extracellular side. Asn-192 carries an N-linked (GlcNAc...) asparagine; by host glycan. A helical membrane pass occupies residues 250-269 (WIFRNPGFALAAAAIAWLLG). Over 270–274 (SSTSQ) the chain is Cytoplasmic. A helical membrane pass occupies residues 275–290 (KVIYLVMILLIAPAYS). The Extracellular portion of the chain corresponds to 291–745 (IRCIGVSNRD…HQIFGAAFKS (455 aa)). A Glycyl lysine isopeptide (Lys-Gly) (interchain with G-Cter in ubiquitin) cross-link involves residue Lys-328. Cystine bridges form between Cys-350–Cys-406 and Cys-382–Cys-411. The fusion peptide stretch occupies residues 388 to 401 (DRGWGNGCGLFGKG). Asn-444 is a glycosylation site (N-linked (GlcNAc...) asparagine; by host). 2 cysteine pairs are disulfide-bonded: Cys-480/Cys-581 and Cys-598/Cys-629. A Glycyl lysine isopeptide (Lys-Gly) (interchain with G-Cter in ubiquitin) cross-link involves residue Lys-571. The helical transmembrane segment at 746-767 (LFGGMSWFSQILIGTLLVWLGL) threads the bilayer. The Cytoplasmic segment spans residues 768–773 (NTKNGS). A helical membrane pass occupies residues 774–794 (ISLMCLALGGVLIFLSTAVSA). Topologically, residues 795 to 1177 (DVGCSVDFSK…EGLKKRMTTK (383 aa)) are lumenal. Cystine bridges form between Cys-798-Cys-809, Cys-849-Cys-937, Cys-973-Cys-1017, Cys-1074-Cys-1123, Cys-1085-Cys-1106, and Cys-1107-Cys-1110. N-linked (GlcNAc...) asparagine; by host glycosylation is found at Asn-924 and Asn-1001. Residues 1178–1198 (IIISTSMAVLVAMILGGFSMS) traverse the membrane as a helical segment. Residues 1199–1220 (DLAKLAILMGATFAEMNTGGDV) are Cytoplasmic-facing. A helical transmembrane segment spans residues 1221–1241 (AHLALIAAFKVRPALLVSFIF). The Lumenal segment spans residues 1242–1270 (RANWTPRESMLLALASCLLQTAISALEGD). A helical transmembrane segment spans residues 1271–1291 (LMVPINGFALAWLAIRAMVVP). The Cytoplasmic portion of the chain corresponds to 1292 to 1295 (RTDN). The chain crosses the membrane as a helical span at residues 1296 to 1316 (ITLAILAALTPLARGTLLVAW). Residues 1317–1345 (RAGLATCGGFMLLSLKGKGSVKKNLPFVM) lie on the Lumenal side of the membrane. Residues 1346–1366 (ALGLTAVRLVDPINVVGLLLL) form a helical membrane-spanning segment. The Cytoplasmic portion of the chain corresponds to 1367–1373 (TRSGKRS). The helical transmembrane segment at 1374–1394 (WPPSEVLTAVGLICALAGGFA) threads the bilayer. The Lumenal segment spans residues 1395-1397 (KAD). A helical membrane pass occupies residues 1398-1418 (IEMAGPMAAVGLLIVSYVVSG). The Cytoplasmic segment spans residues 1419–1472 (KSVDMYIERAGDITWEKDAEVTGNSPRLDVALDESGDFSLVEDDGPPMREIILK). The interval 1425-1464 (IERAGDITWEKDAEVTGNSPRLDVALDESGDFSLVEDDGP) is interacts with and activates NS3 protease. The interval 1429–1451 (GDITWEKDAEVTGNSPRLDVALD) is disordered. The segment at residues 1473–1493 (VVLMAICGMNPIAIPFAAGAW) is an intramembrane region (helical). The Lumenal segment spans residues 1494 to 2170 (YVYVKTGKRS…KAAAAQLPET (677 aa)). A Peptidase S7 domain is found at 1503–1680 (SGALWDVPAP…RREEETPVEC (178 aa)). Active-site charge relay system; for serine protease NS3 activity residues include His-1553, Asp-1577, and Ser-1637. Positions 1683–1839 (PSMLKKKQLT…DSNSPIMDTE (157 aa)) constitute a Helicase ATP-binding domain. The tract at residues 1687-1690 (KKKQ) is important for RNA-binding. ATP is bound at residue 1696–1703 (LHPGAGKT). The DEAH box signature appears at 1787 to 1790 (DEAH). Residues 1834–2013 (PIMDTEVEVP…GLIASLYRPE (180 aa)) enclose the Helicase C-terminal domain. N6-acetyllysine; by host is present on Lys-1891. Residues 2171-2191 (LETIMLLGLLGTVSLGIFFVL) traverse the membrane as a helical segment. The Lumenal segment spans residues 2192–2195 (MRNK). The segment at residues 2196-2216 (GIGKMGFGMVTLGASAWLMWL) is an intramembrane region (helical). Topologically, residues 2217-2218 (SE) are cytoplasmic. A helical transmembrane segment spans residues 2219 to 2239 (IEPARIACVLIVVFLLLVVLI). The Lumenal segment spans residues 2240-2254 (PEPEKQRSPQDNQMA). An intramembrane region (helical) is located at residues 2255–2269 (IIIMVAVGLLGLITA). Residues 2270-2307 (NELGWLERTKSDLSHLMGRREEGATIGFSMDIDLRPAS) are Lumenal-facing. Positions 2308–2328 (AWAIYAALTTFITPAVQHAVT) form an intramembrane region, helical. At 2329–2344 (TSYNNYSLMAMATQAG) the chain is on the lumenal side. The helical transmembrane segment at 2345–2365 (VLFGMGKGMPFYAWDFGVPLL) threads the bilayer. Topologically, residues 2366-2375 (MIGCYSQLTP) are cytoplasmic. Residues 2376 to 2396 (LTLIVAIILLVAHYMYLIPGL) traverse the membrane as a helical segment. Residues 2397–2441 (QAAAARAAQKRTAAGIMKNPVVDGIVVTDIDTMTIDPQVEKKMGQ) are Lumenal-facing. The helical transmembrane segment at 2442-2462 (VLLIAVAVSSAILSRTAWGWG) threads the bilayer. At 2463–3423 (EAGALITAAT…GEEGSTPGVL (961 aa)) the chain is on the cytoplasmic side. The mRNA cap 0-1 NS5-type MT domain occupies 2521-2785 (GGGTGETLGE…DVNLGSGTRA (265 aa)). 2533-2539 (KARLNQM) provides a ligand contact to GTP. S-adenosyl-L-methionine is bound at residue Ser-2576. Ser-2576 carries the post-translational modification Phosphoserine. The For 2'-O-MTase activity role is filled by Lys-2581. An SUMO-interacting motif (SIM) region spans residues 2597 to 2600 (VIDL). Residues Gly-2606, Trp-2607, Thr-2624, Lys-2625, His-2630, Glu-2631, Asp-2651, Val-2652, Asp-2666, and Ile-2667 each contribute to the S-adenosyl-L-methionine site. Asp-2666 acts as the For 2'-O-MTase activity in catalysis. Residue 2669 to 2675 (ESSSSPE) participates in GTP binding. The active-site For 2'-O-MTase activity is the Lys-2702. Residue 2733-2735 (RNS) participates in GTP binding. Residue Glu-2738 is the For 2'-O-MTase activity of the active site. Residue Tyr-2740 participates in S-adenosyl-L-methionine binding. The Nuclear localization signal (NLS) signature appears at 2908–2914 (KHKRPRV). Zn(2+) is bound by residues Glu-2959, His-2963, Cys-2968, and Cys-2971. The region spanning 3049–3199 (GRMYADDTAG…KPIDDRFAHA (151 aa)) is the RdRp catalytic domain. His-3234, Cys-3250, and Cys-3369 together coordinate Zn(2+).

It in the N-terminal section; belongs to the class I-like SAM-binding methyltransferase superfamily. mRNA cap 0-1 NS5-type methyltransferase family. As to quaternary structure, homodimer. Interacts with host SERTAD3; this interaction promotes capsid protein C degradation. Interacts with host CAPRIN1; this interaction is probably linked to the inhibition of stress granules formation by the virus. Interacts with host G3BP1; this interaction is probably linked to the inhibition of stress granules formation by the virus. In terms of assembly, forms heterodimers with envelope protein E in the endoplasmic reticulum and Golgi. Interacts with non-structural protein 2A. Homodimer; in the endoplasmic reticulum and Golgi. Interacts with host TYRO3, AXL and DC-SIGN proteins. Interacts with non-structural protein 2A. Interacts with host HAVCR1; this interaction likely mediates virus attachment to host cell. Interacts with host NCAM1. Interacts with host HSPA5. Interacts with Aedes aegypti SRPN25, APY and venom allergen-1 salivary proteins; the interactions do not affect Zika virus replication in human endothelial cells and keratinocytes. As to quaternary structure, homodimer; Homohexamer when secreted. Interacts with host TBK1. Interacts with host USP8. Interacts with envelope protein E. In terms of assembly, interacts with the structural protein prM/E complex, and the NS2B/NS3 protease complex. Forms a heterodimer with serine protease NS3. May form homooligomers. Interacts with human SPCS1. Interacts with non-structural protein 2A. As to quaternary structure, forms a heterodimer with NS2B. Interacts with NS4B. Interacts with unphosphorylated RNA-directed RNA polymerase NS5; this interaction stimulates RNA-directed RNA polymerase NS5 guanylyltransferase activity. Interacts with non-structural protein 2A. Interacts with host SHFL; this interaction promotes NS3 degradation via a lysosome-dependent pathway. Interacts with host CEP63; this interaction disorganizes the centrosome and inhibits host innate immune response. In terms of assembly, may interact with host ANKLE2; the interaction may cause defects in brain development, such as microcephaly. May interact with host SRPRA and SEC61G. Interacts with serine protease NS3. Interacts with NS1. As to quaternary structure, homodimer. Interacts with host STAT2; this interaction inhibits the phosphorylation of the latter, and, when all viral proteins are present (polyprotein), targets STAT2 for degradation. Interacts with host TBK1 and IKBKE; these interactions lead to the inhibition of the host RIG-I signaling pathway. Interacts with host PAF1 complex; the interaction may prevent the recruitment of the host PAF1 complex to interferon-responsive genes, and thus reduces the immune response. Interacts with serine protease NS3. Interacts with host KPNA2. Interacts with host ZSWIM8; this interaction allows STAT2 binding to ZSWIM8 and subsequent proteasomal degradation leading to inhibition of interferon signaling. Post-translationally, specific enzymatic cleavages in vivo yield mature proteins. Cleavages in the lumen of endoplasmic reticulum are performed by host signal peptidase, whereas cleavages in the cytoplasmic side are performed by serine protease NS3. Signal cleavage at the 2K-4B site requires a prior NS3 protease-mediated cleavage at the 4A-2K site. In terms of processing, cleaved in post-Golgi vesicles by a host furin, releasing the mature small envelope protein M, and peptide pr. This cleavage is incomplete as up to 30% of viral particles still carry uncleaved prM. N-glycosylation plays a role in virulence in mammalian and mosquito hosts, but may have no effect on neurovirulence. Post-translationally, ubiquitination by host TRIM7 promotes virus attachment and fusion of the virus and the host endosome membrane. In terms of processing, N-glycosylated. The excreted form is glycosylated, which is required for efficient secretion of the protein from infected cells. Ubiquitination by host TRIM22 leads to proteasomal degradation. Post-translationally, acetylated by host KAT5. Acetylation modulates NS3 RNA-binding and unwinding activities and plays an important positive role for viral replication. In terms of processing, phosphorylated on serines residues. This phosphorylation may trigger NS5 nuclear localization. Sumoylated, required for regulating IFN induced interferon stimulated genes/ISGs.

The protein resides in the virion. Its subcellular location is the host nucleus. It localises to the host cytoplasm. The protein localises to the host perinuclear region. It is found in the secreted. The protein resides in the virion membrane. Its subcellular location is the host endoplasmic reticulum membrane. It localises to the host cell surface. The catalysed reaction is a 5'-end (5'-triphosphoguanosine)-ribonucleoside in mRNA + S-adenosyl-L-methionine = a 5'-end (N(7)-methyl 5'-triphosphoguanosine)-ribonucleoside in mRNA + S-adenosyl-L-homocysteine. It carries out the reaction a 5'-end (N(7)-methyl 5'-triphosphoguanosine)-ribonucleoside in mRNA + S-adenosyl-L-methionine = a 5'-end (N(7)-methyl 5'-triphosphoguanosine)-(2'-O-methyl-ribonucleoside) in mRNA + S-adenosyl-L-homocysteine + H(+). The enzyme catalyses RNA(n) + a ribonucleoside 5'-triphosphate = RNA(n+1) + diphosphate. It catalyses the reaction Selective hydrolysis of -Xaa-Xaa-|-Yaa- bonds in which each of the Xaa can be either Arg or Lys and Yaa can be either Ser or Ala.. The catalysed reaction is a ribonucleoside 5'-triphosphate + H2O = a ribonucleoside 5'-diphosphate + phosphate + H(+). It carries out the reaction ATP + H2O = ADP + phosphate + H(+). Functionally, plays a role in virus budding by binding to the cell membrane and gathering the viral RNA into a nucleocapsid that forms the core of the mature virus particle. During virus entry, may induce genome penetration into the host cytoplasm after hemifusion induced by the surface proteins. Can migrate to the cell nucleus where it modulates host functions. Inhibits the integrated stress response (ISR) in the infected cell. In terms of biological role, inhibits RNA silencing by interfering with host Dicer. Prevents premature fusion activity of envelope proteins in trans-Golgi by binding to envelope protein E at pH 6.0. After virion release in extracellular space, gets dissociated from E dimers. Its function is as follows. Plays a role in host immune defense modulation and protection of envelope protein E during virion synthesis. PrM-E cleavage is inefficient, many virions are only partially matured and immature prM-E proteins could play a role in immune evasion. Contributes to fetal microcephaly in humans. Acts as a chaperone for envelope protein E during intracellular virion assembly by masking and inactivating envelope protein E fusion peptide. prM is the only viral peptide matured by host furin in the trans-Golgi network probably to avoid catastrophic activation of the viral fusion activity in acidic Golgi compartment prior to virion release. Functionally, may play a role in virus budding. Exerts cytotoxic effects by activating a mitochondrial apoptotic pathway through M ectodomain. May display a viroporin activity. In terms of biological role, binds to host cell surface receptors and mediates fusion between viral and cellular membranes. Efficient virus attachment to cell is, at least in part, mediated by host HAVCR1 in a cell-type specific manner. In addition, host NCAM1 can also be used as entry receptor. Interaction with host HSPA5 plays an important role in the early stages of infection as well. Envelope protein is synthesized in the endoplasmic reticulum and forms a heterodimer with protein prM. The heterodimer plays a role in virion budding in the ER, and the newly formed immature particle is covered with 60 spikes composed of heterodimers between precursor prM and envelope protein E. The virion is transported to the Golgi apparatus where the low pH causes the dissociation of PrM-E heterodimers and formation of E homodimers. PrM-E cleavage is inefficient, many virions are only partially matured and immature prM-E proteins could play a role in immune evasion. Plays a role in the inhibition of host RLR-induced interferon-beta activation by targeting TANK-binding kinase 1/TBK1. In addition, recruits the host deubiquitinase USP8 to cleave 'Lys-11'-linked polyubiquitin chains from caspase-1/CASP1 thus inhibiting its proteasomal degradation. In turn, stabilized CASP1 promotes cleavage of cGAS, which inhibits its ability to recognize mitochondrial DNA release and initiate type I interferon signaling. Its function is as follows. Component of the viral RNA replication complex that recruits genomic RNA, the structural protein prM/E complex, and the NS2B/NS3 protease complex to the virion assembly site and orchestrates virus morphogenesis. Also antagonizes the host alpha/beta interferon antiviral response. May disrupt adherens junction formation and thereby impair proliferation of radial cells in the host cortex. Functionally, required cofactor for the serine protease function of NS3. In terms of biological role, displays three enzymatic activities: serine protease, NTPase and RNA helicase. NS3 serine protease, in association with NS2B, performs its autocleavage and cleaves the polyprotein at dibasic sites in the cytoplasm: C-prM, NS2A-NS2B, NS2B-NS3, NS3-NS4A, NS4A-2K and NS4B-NS5. NS3 RNA helicase binds RNA and unwinds dsRNA in the 3' to 5' direction. Leads to translation arrest when expressed ex vivo. Disrupts host centrosome organization in a CEP63-dependent manner to degrade host TBK1 and inhibits innate immune response. Inhibits the integrated stress response (ISR) in the infected cell. Regulates the ATPase activity of the NS3 helicase activity. NS4A allows NS3 helicase to conserve energy during unwinding. Cooperatively with NS4B suppresses the Akt-mTOR pathway and leads to cellular dysregulation. By inhibiting host ANKLE2 functions, may cause defects in brain development, such as microcephaly. Also antagonizes the host MDA5-mediated induction of alpha/beta interferon antiviral response. Leads to translation arrest when expressed ex vivo. Inhibits the integrated stress response (ISR) in the infected cell. Its function is as follows. Functions as a signal peptide for NS4B and is required for the interferon antagonism activity of the latter. Functionally, induces the formation of ER-derived membrane vesicles where the viral replication takes place. Also plays a role in the inhibition of host RLR-induced interferon-beta production at TANK-binding kinase 1/TBK1 level. Cooperatively with NS4A suppresses the Akt-mTOR pathway and leads to cellular dysregulation. In terms of biological role, replicates the viral (+) and (-) RNA genome, and performs the capping of genomes in the cytoplasm. Methylates viral RNA cap at guanine N-7 and ribose 2'-O positions. Once sufficient NS5 is expressed, binds to the cap-proximal structure and inhibits further translation of the viral genome. Besides its role in RNA genome replication, also prevents the establishment of a cellular antiviral state by blocking the interferon-alpha/beta (IFN-alpha/beta) signaling pathway. Mechanistically, interferes with host kinases TBK1 and IKKE upstream of interferon regulatory factor 3/IRF3 to inhibit the RIG-I pathway. Also antagonizes type I interferon signaling by targeting STAT2 for degradation by the proteasome thereby preventing activation of JAK-STAT signaling pathway. Mechanistically, acts as a scaffold protein to connect host ZSWIM8/CUL3 ligase complex and STAT2, leading to STAT2 degradation. Within the host nucleus, disrupts host SUMO1 and STAT2 co-localization with PML, resulting in PML degradation. May also reduce immune responses by preventing the recruitment of the host PAF1 complex to interferon-responsive genes. The protein is Genome polyprotein of Zika virus (isolate ZIKV/Human/Cambodia/FSS13025/2010) (ZIKV).